We begin with the raw amino-acid sequence, 1485 residues long: Sex-determining transformer protein 2 (1485 aa).

The N-terminal stretch at 1–28 is a signal peptide; it reads MSLRSNKLLVAAVIFTVVTFGLLLTSSI. A run of 9 helical transmembrane segments spans residues 438 to 458, 490 to 510, 584 to 604, 732 to 752, 923 to 943, 950 to 970, 980 to 1000, 1033 to 1053, and 1063 to 1083; these read VVYF…FFAW, IELN…NTYL, WPFI…FVDI, GILL…VMLI, LLAS…FSIT, LIFS…ISLF, DSAV…LSLF, AQVF…AGVV, and TVIL…VLVA. Residues 1131 to 1271 are interaction with fem-3; it reads DFHIRPTNMS…MLHMIEKVQK (141 aa). The tract at residues 1143–1175 is disordered; sequence YAPPPAKKRAKQTNNETDPEKKEDEPGTSNANN. Residues 1181–1201 form a helical membrane-spanning segment; the sequence is AAHRLAILPWHFVLGGIPVDL. 3 disordered regions span residues 1228–1252, 1275–1306, and 1348–1384; these read SELE…PAPE, EKEA…PSHR, and EMPP…PPHP. Basic and acidic residues predominate over residues 1275–1284; sequence EKEAKEKVHQ. Residues 1401–1422 form an MX regulatory domain; required for tra-1 binding region; the sequence is CEDVYWTYNDGRLPPNVAMPPR. The tract at residues 1442 to 1485 is disordered; it reads PPGQPSIPIPAEAMALREERARAHREQEQRDNSQSPSPSPEPGL. Positions 1456 to 1472 are enriched in basic and acidic residues; that stretch reads ALREERARAHREQEQRD.

In terms of assembly, interacts with tra-1 and fem-3. In terms of tissue distribution, somatic and germline tissues.

It is found in the membrane. In terms of biological role, plays a major role in controlling sexual cell fates. Promotes female development in XX animals where it sequesters one or more of the FEM proteins to the membrane thereby freeing the tra-1 protein (a putative transcription factor) to enter the nucleus and promote female development. In XO animals it acts as a receptor for her-1 which prevents it from binding to FEM proteins thereby repressing the activity of tra-1. Negatively regulates male development when bound to fem-3 and is required together with tra-1 for promoting spermatogenesis. This is Sex-determining transformer protein 2 from Caenorhabditis remanei (Caenorhabditis vulgaris).